Here is a 156-residue protein sequence, read N- to C-terminus: Phosphopantetheine adenylyltransferase (156 aa).

A substrate-binding site is contributed by Thr9. Residues 9–10 and His17 each bind ATP; that span reads TF. Residues Lys41, Leu73, and Arg87 each contribute to the substrate site. Residues 88–90, Glu98, and 123–129 each bind ATP; these read GVR and WVFVSST.

The protein belongs to the bacterial CoaD family. As to quaternary structure, homohexamer. Mg(2+) serves as cofactor.

It localises to the cytoplasm. It carries out the reaction (R)-4'-phosphopantetheine + ATP + H(+) = 3'-dephospho-CoA + diphosphate. The protein operates within cofactor biosynthesis; coenzyme A biosynthesis; CoA from (R)-pantothenate: step 4/5. Reversibly transfers an adenylyl group from ATP to 4'-phosphopantetheine, yielding dephospho-CoA (dPCoA) and pyrophosphate. The polypeptide is Phosphopantetheine adenylyltransferase (Haemophilus influenzae (strain PittEE)).